The following is a 70-amino-acid chain: Small ribosomal subunit protein bS21 (70 aa).

It belongs to the bacterial ribosomal protein bS21 family.

In Nitrosospira multiformis (strain ATCC 25196 / NCIMB 11849 / C 71), this protein is Small ribosomal subunit protein bS21.